The chain runs to 246 residues: Exosome complex component Rrp41 (246 aa).

Belongs to the RNase PH family. Rrp41 subfamily. As to quaternary structure, component of the archaeal exosome complex. Forms a hexameric ring-like arrangement composed of 3 Rrp41-Rrp42 heterodimers. The hexameric ring associates with a trimer of Rrp4 and/or Csl4 subunits.

The protein localises to the cytoplasm. Its function is as follows. Catalytic component of the exosome, which is a complex involved in RNA degradation. Has 3'-&gt;5' exoribonuclease activity. Can also synthesize heteromeric RNA-tails. This Pyrobaculum calidifontis (strain DSM 21063 / JCM 11548 / VA1) protein is Exosome complex component Rrp41.